The sequence spans 288 residues: Mediator of RNA polymerase II transcription subunit 8 (288 aa).

Residues 4-58 are a coiled coil; the sequence is EELKQLELLRNRFAQLTSNLGSLRTSVSNSNPLPTYESLQASVNILQANIRSIQD. 3 disordered regions span residues 122–150, 191–245, and 266–288; these read GGVH…APQD, VRTG…GGGM, and PGNV…APPR. Acidic residues-rich tracts occupy residues 131-148 and 200-221; these read DYDD…DDAP and EESE…EDEA. Residues 180 to 228 adopt a coiled-coil conformation; the sequence is TAEERAAGIENVRTGLRQTLEESEDDDEDEEEEEEDEEEDEAAAAAGNA. Residues 227–245 show a composition bias toward gly residues; that stretch reads NAGGLATGAGGSAAAGGGM.

Belongs to the Mediator complex subunit 8 family. In terms of assembly, component of the Mediator complex.

Its subcellular location is the nucleus. Component of the Mediator complex, a coactivator involved in the regulated transcription of nearly all RNA polymerase II-dependent genes. Mediator functions as a bridge to convey information from gene-specific regulatory proteins to the basal RNA polymerase II transcription machinery. Mediator is recruited to promoters by direct interactions with regulatory proteins and serves as a scaffold for the assembly of a functional preinitiation complex with RNA polymerase II and the general transcription factors. The protein is Mediator of RNA polymerase II transcription subunit 8 (MED8) of Chaetomium globosum (strain ATCC 6205 / CBS 148.51 / DSM 1962 / NBRC 6347 / NRRL 1970) (Soil fungus).